Consider the following 253-residue polypeptide: MRKPIIAGNWKMNKVLSEAVSFVEEVKSSIPAADKAEAVVCAPALFLEKLTSAVKGTDLKVGAQNMHFEESGAFTGEISPAALKDLGVEYCVIGHSERREMFAETDETVNKKAHAAFKYGIVPIICVGETLEEREANKTNELVADQVKKALAGLTTEQVAASVIAYEPIWAIGTGKSSTAQDANEVCAHIRKTVASEFGQTAADSVRIQYGGSVKPANIKEYMAESDIDGALVGGASLEPQSFVQLLEAGQYE.

Substrate is bound at residue 9–11 (NWK). The active-site Electrophile is the H95. The Proton acceptor role is filled by E167. Substrate is bound by residues G173, S213, and 234 to 235 (GG). Position 213 is a phosphoserine (S213).

This sequence belongs to the triosephosphate isomerase family. In terms of assembly, homodimer.

It is found in the cytoplasm. The catalysed reaction is D-glyceraldehyde 3-phosphate = dihydroxyacetone phosphate. It participates in carbohydrate biosynthesis; gluconeogenesis. The protein operates within carbohydrate degradation; glycolysis; D-glyceraldehyde 3-phosphate from glycerone phosphate: step 1/1. Involved in the gluconeogenesis. Catalyzes stereospecifically the conversion of dihydroxyacetone phosphate (DHAP) to D-glyceraldehyde-3-phosphate (G3P). This chain is Triosephosphate isomerase, found in Bacillus licheniformis (strain ATCC 14580 / DSM 13 / JCM 2505 / CCUG 7422 / NBRC 12200 / NCIMB 9375 / NCTC 10341 / NRRL NRS-1264 / Gibson 46).